The primary structure comprises 459 residues: UNC93-like protein 1 (459 aa).

Positions 1–26 (MNVRDEGKTTAEKHGGGEENKSPENK) are disordered. Transmembrane regions (helical) follow at residues 38–58 (LMGF…GMGG), 73–93 (AVYT…NVLG), 96–116 (LTLA…LYYN), 122–142 (AFAI…WAGE), 159–179 (IALF…IPFI), 195–215 (YIAF…ILPA), 251–271 (LLIV…FNNV), 287–307 (FYWG…DFSF), 314–334 (GFTG…GGLA), 355–375 (GIEF…DAMY), and 425–445 (LIVN…LVYF).

Belongs to the unc-93 family.

Its subcellular location is the membrane. The chain is UNC93-like protein 1 from Arabidopsis thaliana (Mouse-ear cress).